Here is a 240-residue protein sequence, read N- to C-terminus: Adenosylcobinamide-GDP ribazoletransferase (240 aa).

5 helical membrane passes run 31–51 (LLYYPLVGLLFGLLLWLASHL), 62–81 (ALLLTLWVLLSGALHLDGLA), 109–129 (IAVVTLVLVLLLKFCALWVLV), 133–153 (IGAQLLLAPLIGRAAMLGLFL), and 179–199 (VLLVCVLFCLFLGGWSVLLAL).

The protein belongs to the CobS family. Requires Mg(2+) as cofactor.

It is found in the cell inner membrane. The enzyme catalyses alpha-ribazole + adenosylcob(III)inamide-GDP = adenosylcob(III)alamin + GMP + H(+). It catalyses the reaction alpha-ribazole 5'-phosphate + adenosylcob(III)inamide-GDP = adenosylcob(III)alamin 5'-phosphate + GMP + H(+). It participates in cofactor biosynthesis; adenosylcobalamin biosynthesis; adenosylcobalamin from cob(II)yrinate a,c-diamide: step 7/7. In terms of biological role, joins adenosylcobinamide-GDP and alpha-ribazole to generate adenosylcobalamin (Ado-cobalamin). Also synthesizes adenosylcobalamin 5'-phosphate from adenosylcobinamide-GDP and alpha-ribazole 5'-phosphate. The polypeptide is Adenosylcobinamide-GDP ribazoletransferase (Pseudomonas putida (strain ATCC 700007 / DSM 6899 / JCM 31910 / BCRC 17059 / LMG 24140 / F1)).